The primary structure comprises 65 residues: Sarcoplasmic/endoplasmic reticulum calcium ATPase regulator ARLN (65 aa).

The residue at position 1 (M1) is an N-acetylmethionine. Positions 1 to 36 (MEVSQAASGTDGVRERRGSFEAGRRNQDEAPQSGMN) are disordered. The span at 12-28 (GVRERRGSFEAGRRNQD) shows a compositional bias: basic and acidic residues. Residue S19 is modified to Phosphoserine. The helical transmembrane segment at 44-64 (WLDLWLFILFDLALFVFVYLL) threads the bilayer.

As to quaternary structure, homooligomer. Can also form heterooligomers with other sarcoplasmic/endoplasmic reticulum calcium ATPase (SERCA) regulators ERLN, PLN, SLN and STRIT1/DWORF. Monomer. Interacts as a monomer with ATP2A2/SERCA2; the interaction results in inhibition of ATP2A2 Ca(2+) affinity. In the embryo, expressed in heart, epidermal epithelium, salivary gland, brown fat, intestinal epithelium and bladder urothelium.

The protein localises to the endoplasmic reticulum membrane. Its function is as follows. Inhibits the activity of the calcium ATPases ATP2A2/SERCA2 and ATP2A3/SERCA3 by decreasing their apparent affinity for Ca(2+). The chain is Sarcoplasmic/endoplasmic reticulum calcium ATPase regulator ARLN (Arln) from Mus musculus (Mouse).